Reading from the N-terminus, the 201-residue chain is Large ribosomal subunit protein bL25 (201 aa).

Residues 181-201 (APRESEEEAEEEATETAKESE) form a disordered region. The span at 185–194 (SEEEAEEEAT) shows a compositional bias: acidic residues.

This sequence belongs to the bacterial ribosomal protein bL25 family. CTC subfamily. As to quaternary structure, part of the 50S ribosomal subunit; part of the 5S rRNA/L5/L18/L25 subcomplex. Contacts the 5S rRNA. Binds to the 5S rRNA independently of L5 and L18.

In terms of biological role, this is one of the proteins that binds to the 5S RNA in the ribosome where it forms part of the central protuberance. This Thermoanaerobacter pseudethanolicus (strain ATCC 33223 / 39E) (Clostridium thermohydrosulfuricum) protein is Large ribosomal subunit protein bL25.